Reading from the N-terminus, the 342-residue chain is MNKDLLLSSYDYTLANELIANYPTNPKEDARLLVFDRKNKEIFHTTFKNLQDFLPNCAIFFNDTKVIKARIYGNKASGGKIELFLHQPFLNSHNPLFLAQIKGRIKKDEILYFKEDLKVRVVELLNDGLRKVQFFQNDKTLDTSNLYNLLDKIGHIPLPPYIKREDEKSDLKDYQSIFAKNLGAVAAPTASLHFSETMLENLRKKHEIYHLTLHVGAGTFKSVECENIQEHKMHSEFFNIPQQACEIIDSKQAILGVGTTVTRTIEYYTRTKTKNGFCDLFLHPQNPPIRQNHLLTNFHLPKSTLIMLVSAFIGREQCLKLYELAIKEKYRFYSYGDAMLIL.

Belongs to the QueA family. As to quaternary structure, monomer.

The protein resides in the cytoplasm. It carries out the reaction 7-aminomethyl-7-carbaguanosine(34) in tRNA + S-adenosyl-L-methionine = epoxyqueuosine(34) in tRNA + adenine + L-methionine + 2 H(+). It functions in the pathway tRNA modification; tRNA-queuosine biosynthesis. Functionally, transfers and isomerizes the ribose moiety from AdoMet to the 7-aminomethyl group of 7-deazaguanine (preQ1-tRNA) to give epoxyqueuosine (oQ-tRNA). This is S-adenosylmethionine:tRNA ribosyltransferase-isomerase from Campylobacter jejuni subsp. jejuni serotype O:2 (strain ATCC 700819 / NCTC 11168).